The chain runs to 232 residues: Octanoyltransferase (232 aa).

The BPL/LPL catalytic domain occupies 40-226 (GSAPERVWLL…TWQDLFGSVP (187 aa)). Residues 79-86 (RGGQWTYH), 157-159 (ALG), and 170-172 (GVA) contribute to the substrate site. C188 serves as the catalytic Acyl-thioester intermediate.

It belongs to the LipB family.

It is found in the cytoplasm. The enzyme catalyses octanoyl-[ACP] + L-lysyl-[protein] = N(6)-octanoyl-L-lysyl-[protein] + holo-[ACP] + H(+). It participates in protein modification; protein lipoylation via endogenous pathway; protein N(6)-(lipoyl)lysine from octanoyl-[acyl-carrier-protein]: step 1/2. In terms of biological role, catalyzes the transfer of endogenously produced octanoic acid from octanoyl-acyl-carrier-protein onto the lipoyl domains of lipoate-dependent enzymes. Lipoyl-ACP can also act as a substrate although octanoyl-ACP is likely to be the physiological substrate. The protein is Octanoyltransferase of Gluconacetobacter diazotrophicus (strain ATCC 49037 / DSM 5601 / CCUG 37298 / CIP 103539 / LMG 7603 / PAl5).